Reading from the N-terminus, the 316-residue chain is Retinol dehydrogenase 11 (316 aa).

The helical; Signal-anchor for type II membrane protein transmembrane segment at 1-21 (MFGFLLLLSLPFILYLVTPKI) threads the bilayer. The Cytoplasmic segment spans residues 22 to 316 (RKMLSSGVCT…CDLLGLPVDW (295 aa)). 45–51 (GANTGIG) contributes to the NADP(+) binding site. Lysine 109 carries the N6-acetyllysine modification. Serine 174 contributes to the substrate binding site. Catalysis depends on tyrosine 199, which acts as the Proton acceptor.

Belongs to the short-chain dehydrogenases/reductases (SDR) family. In terms of processing, not glycosylated. Expressed at high level in liver and testis. Expressed at lower levels in smooth muscle, thymus, submaxillary gland and epididymis. In testis, expression is restricted to pachytene spermatocytes. Also expressed in four layers of the retina, including the outer segment of rods and cones.

It is found in the endoplasmic reticulum membrane. It carries out the reaction all-trans-retinol + NADP(+) = all-trans-retinal + NADPH + H(+). It catalyses the reaction 11-cis-retinol + NADP(+) = 11-cis-retinal + NADPH + H(+). The enzyme catalyses 9-cis-retinol + NADP(+) = 9-cis-retinal + NADPH + H(+). The catalysed reaction is 13-cis-retinol + NADP(+) = 13-cis-retinal + NADPH + H(+). It carries out the reaction a medium-chain primary fatty alcohol + NADP(+) = a medium-chain fatty aldehyde + NADPH + H(+). It catalyses the reaction (2E,6Z)-nona-2,6-dien-1-ol + NADP(+) = (2E,6Z)-nona-2,6-dienal + NADPH + H(+). The enzyme catalyses (E)-oct-2-en-1-ol + NADP(+) = (2E)-octenal + NADPH + H(+). The catalysed reaction is (E)-non-2-en-1-ol + NADP(+) = (E)-non-2-enal + NADPH + H(+). It carries out the reaction heptan-1-ol + NADP(+) = heptanal + NADPH + H(+). It catalyses the reaction hexan-1-ol + NADP(+) = hexanal + NADPH + H(+). The enzyme catalyses decan-1-ol + NADP(+) = decanal + NADPH + H(+). The catalysed reaction is nonan-1-ol + NADP(+) = nonanal + NADPH + H(+). It carries out the reaction octan-1-ol + NADP(+) = octanal + NADPH + H(+). It catalyses the reaction (Z)-non-6-en-1-ol + NADP(+) = (Z)-non-6-enal + NADPH + H(+). It functions in the pathway cofactor metabolism; retinol metabolism. Its function is as follows. Retinol dehydrogenase with a clear preference for NADP. Displays high activity towards 9-cis, 11-cis and all-trans-retinol, and to a lesser extent on 13-cis-retinol. Also exhibits reductive activity towards toxic lipid peroxidation products such as medium-chain aldehydes trans-2-nonenal, nonanal, and cis-6-nonenal. Has no dehydrogenase activity towards steroid. Seems to be required for homeostasis of retinol in liver and testis. The chain is Retinol dehydrogenase 11 (Rdh11) from Mus musculus (Mouse).